The chain runs to 186 residues: uncharacterized protein (186 aa).

Transmembrane regions (helical) follow at residues G43–P63, L69–V89, and W143–V163.

It localises to the endoplasmic reticulum membrane. This is an uncharacterized protein from Schizosaccharomyces pombe (strain 972 / ATCC 24843) (Fission yeast).